Reading from the N-terminus, the 531-residue chain is Zinc finger protein 837 (531 aa).

Residues 1 to 101 are disordered; that stretch reads MEAPAQKAGQ…CGPTSSQNPE (101 aa). Basic and acidic residues predominate over residues 24 to 50; sequence AREKRPEEPRPLEEDRAGSRPTQKGDL. 8 consecutive C2H2-type zinc fingers follow at residues 271–293, 299–321, 363–385, 391–413, 419–441, 447–469, 475–497, and 503–525; these read YACD…QRIH, YECA…QKTH, YECA…RRVH, YACP…QRTH, YACP…QRAH, YGCS…ERLH, YICR…LRTH, and YACG…RKRH.

The protein belongs to the krueppel C2H2-type zinc-finger protein family.

The protein resides in the nucleus. Functionally, may be involved in transcriptional regulation. The polypeptide is Zinc finger protein 837 (ZNF837) (Homo sapiens (Human)).